Consider the following 404-residue polypeptide: Deoxyguanosinetriphosphate triphosphohydrolase-like protein (404 aa).

The disordered stretch occupies residues 1 to 32 (MAVGMAAPHATYASDPARSRGRLFDEPPSKTR). A compositionally biased stretch (basic and acidic residues) spans 22–32 (RLFDEPPSKTR). Residues 69 to 217 (RLTHTLEVAQ…AAIADDIAYD (149 aa)) enclose the HD domain.

This sequence belongs to the dGTPase family. Type 2 subfamily.

The chain is Deoxyguanosinetriphosphate triphosphohydrolase-like protein from Nitrobacter hamburgensis (strain DSM 10229 / NCIMB 13809 / X14).